The primary structure comprises 367 residues: MSYGIVTEQIATFDTELRLESGRILGPIDIAYETYGTLNESRSNAILVTHAWTGSAHLAGRYSEDEKRAGWWDEIVGPGALLDTDRYFVICSNVIGSCFGSTGPTSINPKTGKRYNLAFPVITVRDMVKAQALLMDRLGIGKLFCVLGGSMGGMQALEWATQFPERVGSAVVLATTPRPSAQAISLNAVARWAIFNDPNWKKGEYRKNPKDGLALARGIGHITFLSDESMTAKFDRRFSARDGQFDFFGQFEVERYLTYNGYNFVDRFDANSFLYLAKALDLYDVASGCESLEEAFAPVTAPIQFFAFTSDWLYPPAQTEEMVASLKTLGKQVEYHLITSAYGHDAFLLEHQTFTPLVESFLDRVKV.

The AB hydrolase-1 domain occupies 44-350 (NAILVTHAWT…AYGHDAFLLE (307 aa)). Ser-150 serves as the catalytic Nucleophile. Position 217 (Arg-217) interacts with substrate. Residues Asp-311 and His-344 contribute to the active site. A substrate-binding site is contributed by Asp-345.

It belongs to the AB hydrolase superfamily. MetX family. In terms of assembly, homodimer.

The protein localises to the cytoplasm. It carries out the reaction L-homoserine + acetyl-CoA = O-acetyl-L-homoserine + CoA. It participates in amino-acid biosynthesis; L-methionine biosynthesis via de novo pathway; O-acetyl-L-homoserine from L-homoserine: step 1/1. Functionally, transfers an acetyl group from acetyl-CoA to L-homoserine, forming acetyl-L-homoserine. This chain is Homoserine O-acetyltransferase, found in Citrifermentans bemidjiense (strain ATCC BAA-1014 / DSM 16622 / JCM 12645 / Bem) (Geobacter bemidjiensis).